We begin with the raw amino-acid sequence, 928 residues long: Tyrosine-protein phosphatase 3 (928 aa).

Residue Thr75 is modified to Phosphothreonine. Residues 111 to 232 enclose the Rhodanese domain; the sequence is PDEKVLLLDV…FKILFPDHIN (122 aa). Residues 247–307 are disordered; that stretch reads KSPKTNLMNS…PRNVLSDSPM (61 aa). Position 248 is a phosphoserine (Ser248). 2 stretches are compositionally biased toward polar residues: residues 249-259 and 265-275; these read PKTNLMNSLHN and TATTPLSSPQM. A compositionally biased stretch (basic and acidic residues) spans 280–289; the sequence is KVPDDSRSDH. The segment covering 290–307 has biased composition (low complexity); that stretch reads SNFSSSPSPRNVLSDSPM. Residues Ser297 and Ser368 each carry the phosphoserine modification. Disordered stretches follow at residues 467 to 487 and 672 to 713; these read LTST…NKVQ and MRKN…NNNN. Residues 502–878 form the Tyrosine-protein phosphatase domain; the sequence is YKSMLSLESD…IFIYDCLLFY (377 aa). A compositionally biased stretch (polar residues) spans 672–691; sequence MRKNTMGTQNSSLYSAGVQG. Over residues 692–713 the composition is skewed to low complexity; it reads NSSNYSTDNDNDNDNNNNNNNN. Residue Cys804 is the Phosphocysteine intermediate of the active site.

This sequence belongs to the protein-tyrosine phosphatase family. Non-receptor class subfamily. Interacts with HOG1.

Its subcellular location is the cytoplasm. The enzyme catalyses O-phospho-L-tyrosyl-[protein] + H2O = L-tyrosyl-[protein] + phosphate. Its function is as follows. Major phosphatase responsible for tyrosine dephosphorylation of MAP kinases FUS3 and HOG1 to inactivate their activity; it also has important roles, along with MSG5, in the inactivation of FUS3 following pheromone stimulation. This chain is Tyrosine-protein phosphatase 3 (PTP3), found in Saccharomyces cerevisiae (strain ATCC 204508 / S288c) (Baker's yeast).